A 189-amino-acid chain; its full sequence is Large ribosomal subunit protein uL10 (189 aa).

It belongs to the universal ribosomal protein uL10 family. As to quaternary structure, part of the ribosomal stalk of the 50S ribosomal subunit. The N-terminus interacts with L11 and the large rRNA to form the base of the stalk. The C-terminus forms an elongated spine to which L12 dimers bind in a sequential fashion forming a multimeric L10(L12)X complex.

In terms of biological role, forms part of the ribosomal stalk, playing a central role in the interaction of the ribosome with GTP-bound translation factors. This is Large ribosomal subunit protein uL10 from Rippkaea orientalis (strain PCC 8801 / RF-1) (Cyanothece sp. (strain PCC 8801)).